A 391-amino-acid chain; its full sequence is Succinyl-diaminopimelate desuccinylase (391 aa).

His-78 is a Zn(2+) binding site. Asp-80 is a catalytic residue. A Zn(2+)-binding site is contributed by Asp-111. Catalysis depends on Glu-145, which acts as the Proton acceptor. The Zn(2+) site is built by Glu-146, Glu-174, and His-360.

Belongs to the peptidase M20A family. DapE subfamily. Homodimer. Zn(2+) serves as cofactor. Requires Co(2+) as cofactor.

The catalysed reaction is N-succinyl-(2S,6S)-2,6-diaminopimelate + H2O = (2S,6S)-2,6-diaminopimelate + succinate. It participates in amino-acid biosynthesis; L-lysine biosynthesis via DAP pathway; LL-2,6-diaminopimelate from (S)-tetrahydrodipicolinate (succinylase route): step 3/3. Functionally, catalyzes the hydrolysis of N-succinyl-L,L-diaminopimelic acid (SDAP), forming succinate and LL-2,6-diaminopimelate (DAP), an intermediate involved in the bacterial biosynthesis of lysine and meso-diaminopimelic acid, an essential component of bacterial cell walls. This chain is Succinyl-diaminopimelate desuccinylase, found in Albidiferax ferrireducens (strain ATCC BAA-621 / DSM 15236 / T118) (Rhodoferax ferrireducens).